The chain runs to 469 residues: Glutamine synthetase (469 aa).

Residues 16–100 enclose the GS beta-grasp domain; that stretch reads EGVQYVDLRF…MICDIYDPVT (85 aa). In terms of domain architecture, GS catalytic spans 108–469; the sequence is TRYIAQKAEQ…PKEFELYWDI (362 aa). Positions 133 and 135 each coordinate Mg(2+). Glu207 contributes to the ATP binding site. 2 residues coordinate Mg(2+): Glu212 and Glu220. L-glutamate contacts are provided by residues 264–265 and Gly265; that span reads NG. Residue His269 coordinates Mg(2+). ATP contacts are provided by residues 271-273 and Ser273; that span reads HFS. L-glutamate is bound by residues Arg321, Glu327, and Arg339. ATP is bound by residues Arg339, Arg344, and Lys353. A Mg(2+)-binding site is contributed by Glu358. Arg360 contacts L-glutamate. The residue at position 398 (Tyr398) is an O-AMP-tyrosine.

Belongs to the glutamine synthetase family. As to quaternary structure, oligomer of 12 subunits arranged in the form of two hexagons. Mg(2+) is required as a cofactor.

It is found in the cytoplasm. It catalyses the reaction L-glutamate + NH4(+) + ATP = L-glutamine + ADP + phosphate + H(+). Its activity is regulated as follows. The activity of this enzyme could be controlled by adenylation under conditions of abundant glutamine. Catalyzes the ATP-dependent biosynthesis of glutamine from glutamate and ammonia. The chain is Glutamine synthetase from Aquifex aeolicus (strain VF5).